Reading from the N-terminus, the 456-residue chain is Bifunctional protein GlmU (456 aa).

The pyrophosphorylase stretch occupies residues Met1–Arg229. UDP-N-acetyl-alpha-D-glucosamine contacts are provided by residues Leu11–Gly14, Lys25, Gln76, Gly81–Thr82, Tyr103–Asp105, Gly140, Glu154, Asn169, and Asn227. Asp105 is a Mg(2+) binding site. Asn227 is a Mg(2+) binding site. Residues Leu230–Ala250 form a linker region. The tract at residues Gly251–Lys456 is N-acetyltransferase. Residues Arg333 and Lys351 each contribute to the UDP-N-acetyl-alpha-D-glucosamine site. Catalysis depends on His363, which acts as the Proton acceptor. 2 residues coordinate UDP-N-acetyl-alpha-D-glucosamine: Tyr366 and Asn377. Residues Ala380, Asn386–Tyr387, Ser405, Ala423, and Arg440 each bind acetyl-CoA.

In the N-terminal section; belongs to the N-acetylglucosamine-1-phosphate uridyltransferase family. It in the C-terminal section; belongs to the transferase hexapeptide repeat family. In terms of assembly, homotrimer. Requires Mg(2+) as cofactor.

Its subcellular location is the cytoplasm. The catalysed reaction is alpha-D-glucosamine 1-phosphate + acetyl-CoA = N-acetyl-alpha-D-glucosamine 1-phosphate + CoA + H(+). It catalyses the reaction N-acetyl-alpha-D-glucosamine 1-phosphate + UTP + H(+) = UDP-N-acetyl-alpha-D-glucosamine + diphosphate. It participates in nucleotide-sugar biosynthesis; UDP-N-acetyl-alpha-D-glucosamine biosynthesis; N-acetyl-alpha-D-glucosamine 1-phosphate from alpha-D-glucosamine 6-phosphate (route II): step 2/2. It functions in the pathway nucleotide-sugar biosynthesis; UDP-N-acetyl-alpha-D-glucosamine biosynthesis; UDP-N-acetyl-alpha-D-glucosamine from N-acetyl-alpha-D-glucosamine 1-phosphate: step 1/1. Its pathway is bacterial outer membrane biogenesis; LPS lipid A biosynthesis. In terms of biological role, catalyzes the last two sequential reactions in the de novo biosynthetic pathway for UDP-N-acetylglucosamine (UDP-GlcNAc). The C-terminal domain catalyzes the transfer of acetyl group from acetyl coenzyme A to glucosamine-1-phosphate (GlcN-1-P) to produce N-acetylglucosamine-1-phosphate (GlcNAc-1-P), which is converted into UDP-GlcNAc by the transfer of uridine 5-monophosphate (from uridine 5-triphosphate), a reaction catalyzed by the N-terminal domain. In Citrobacter koseri (strain ATCC BAA-895 / CDC 4225-83 / SGSC4696), this protein is Bifunctional protein GlmU.